Here is a 92-residue protein sequence, read N- to C-terminus: Neuropeptide ShK-like2 (92 aa).

An N-terminal signal peptide occupies residues 1-23 (MTTIRCVLFAVLLFAYCALLIKA). Positions 24–51 (RSIDAEAEKTWQEEETKTVAEKSPLKKR) are excised as a propeptide. Cystine bridges form between cysteine 53–cysteine 92, cysteine 61–cysteine 85, and cysteine 70–cysteine 89.

As to expression, transcripts are first expressed mostly in the endoderm (with rare ectodermal cells) in the late planulae. They are mostly expressed in endodermal ganglion cells in the body column and tentacles in primary polyps, as well as in a small number of ectodermal sensory neurons in tentacles and body wall. They are not expressed in nematocytes. Transcripts are predominantly expressed in ectodermal sensory neurons in early and late planulae. They are expressed in endodermal ganglion cells in the body column and tentacles in primary polyps, as well as in a small number of ectodermal neurons in pharynx. They are not expressed in nematocytes.

Functionally, in vivo, this neuropeptide induces contraction paralysis followed by death (within 2 hours) on 4 zebrafish larvae on the 15 tested. Also induces body contraction in Nematostella 11-dpf polyps. This Nematostella vectensis (Starlet sea anemone) protein is Neuropeptide ShK-like2.